We begin with the raw amino-acid sequence, 531 residues long: Acetate CoA-transferase YdiF (531 aa).

Glu-333 (5-glutamyl coenzyme A thioester intermediate) is an active-site residue.

This sequence belongs to the 3-oxoacid CoA-transferase family. Homotetramer; dimer of dimers.

The catalysed reaction is an acyl-CoA + acetate = a carboxylate + acetyl-CoA. Its function is as follows. CoA transferase having broad substrate specificity for short-chain acyl-CoA thioesters with the activity decreasing when the length of the carboxylic acid chain exceeds four carbons. May play a role in short-chain fatty acid metabolism in E.coli. The protein is Acetate CoA-transferase YdiF (ydiF) of Escherichia coli (strain K12).